A 190-amino-acid polypeptide reads, in one-letter code: E3 ubiquitin-protein ligase RNF4 (190 aa).

Residues 1 to 16 (MSTRKRRGGAINSRQA) form a required for ubiquitination activity region. The segment at 1–29 (MSTRKRRGGAINSRQAQKRTREATSTPEI) is disordered. Residues 4 to 61 (RKRRGGAINSRQAQKRTREATSTPEISLEAEPIELVETAGDEIVDLTCESLEPVVVDL) are mediates interaction with TRPS1. 4 short sequence motifs (SUMO interaction motif) span residues 36–39 (IELV), 46–49 (IVDL), 57–59 (VVV), and 67–70 (VVIV). S94 and S95 each carry phosphoserine. Zn(2+)-binding residues include C132, C135, C154, H156, C159, C162, C173, and C176. The RING-type zinc finger occupies 132-177 (CPICMDGYSEIVQNGRLIVSTECGHVFCSQCLRDSLKNANTCPTCR).

As to quaternary structure, homodimer (via RING-type zinc finger domain). Interacts with GSC2. Interacts with AR/the androgen receptor and TBP. Interacts with TCF20. Interacts with PATZ1. Interacts with TRPS1; negatively regulates TRPS1 transcriptional repressor activity. Interacts with PML (isoform PML-1, isoform PML-2, isoform PML-3, isoform PML-4, isoform PML-5 and isoform PML-6). Interacts with PRDM1/Blimp-1. Sumoylated; conjugated by one or two SUMO1 moieties. Post-translationally, autoubiquitinated. As to expression, widely expressed at low levels in many tissues; highly expressed in testis.

Its subcellular location is the cytoplasm. It is found in the nucleus. The protein localises to the PML body. It carries out the reaction S-ubiquitinyl-[E2 ubiquitin-conjugating enzyme]-L-cysteine + [acceptor protein]-L-lysine = [E2 ubiquitin-conjugating enzyme]-L-cysteine + N(6)-ubiquitinyl-[acceptor protein]-L-lysine.. It functions in the pathway protein modification; protein ubiquitination. Its function is as follows. E3 ubiquitin-protein ligase which binds polysumoylated chains covalently attached to proteins and mediates 'Lys-6'-, 'Lys-11'-, 'Lys-48'- and 'Lys-63'-linked polyubiquitination of those substrates and their subsequent targeting to the proteasome for degradation. Regulates the degradation of several proteins including PML and the transcriptional activator PEA3. Involved in chromosome alignment and spindle assembly, it regulates the kinetochore CENPH-CENPI-CENPK complex by targeting polysumoylated CENPI to proteasomal degradation. Regulates the cellular responses to hypoxia and heat shock through degradation of respectively EPAS1 and PARP1. Alternatively, it may also bind DNA/nucleosomes and have a more direct role in the regulation of transcription for instance enhancing basal transcription and steroid receptor-mediated transcriptional activation. Catalyzes ubiquitination of sumoylated PARP1 in response to PARP1 trapping to chromatin, leading to PARP1 removal from chromatin by VCP/p97. The polypeptide is E3 ubiquitin-protein ligase RNF4 (Homo sapiens (Human)).